Consider the following 196-residue polypeptide: Molybdenum cofactor guanylyltransferase (196 aa).

GTP-binding positions include 14 to 16 (LAG), lysine 27, aspartate 73, and aspartate 106. Aspartate 106 serves as a coordination point for Mg(2+).

It belongs to the MobA family. In terms of assembly, monomer. It depends on Mg(2+) as a cofactor.

The protein localises to the cytoplasm. The catalysed reaction is Mo-molybdopterin + GTP + H(+) = Mo-molybdopterin guanine dinucleotide + diphosphate. Transfers a GMP moiety from GTP to Mo-molybdopterin (Mo-MPT) cofactor (Moco or molybdenum cofactor) to form Mo-molybdopterin guanine dinucleotide (Mo-MGD) cofactor. The protein is Molybdenum cofactor guanylyltransferase of Acidiphilium cryptum (strain JF-5).